The chain runs to 248 residues: PACRG-like protein (248 aa).

Position 1 is an N-acetylmethionine (Met1). Residues 1 to 72 (MQRSECSGGV…NPKTINPFGE (72 aa)) form a disordered region. Polar residues-rich tracts occupy residues 14–29 (NRAT…SSTQ) and 36–45 (VQRSKSSSLT). Ser47 carries the phosphoserine modification.

This Mus musculus (Mouse) protein is PACRG-like protein (Pacrgl).